The chain runs to 354 residues: Guanine nucleotide-binding protein G(i) subunit alpha-3 (354 aa).

A lipid anchor (N-myristoyl glycine) is attached at glycine 2. The S-palmitoyl cysteine moiety is linked to residue cysteine 3. A G-alpha domain is found at 32–354 (KEVKLLLLGA…KNNLKECGLY (323 aa)). A G1 motif region spans residues 35–48 (KLLLLGAGESGKST). GTP is bound by residues glycine 42, glutamate 43, serine 44, glycine 45, lysine 46, serine 47, threonine 48, aspartate 150, serine 151, leucine 175, arginine 176, threonine 177, arginine 178, valine 179, lysine 180, threonine 181, valine 201, glycine 203, asparagine 269, lysine 270, aspartate 272, leucine 273, cysteine 325, alanine 326, and threonine 327. Serine 47 contacts Mg(2+). The tract at residues 173-181 (DVLRTRVKT) is G2 motif. Threonine 181 provides a ligand contact to Mg(2+). The interval 196-205 (FKMFDVGGQR) is G3 motif. The G4 motif stretch occupies residues 265–272 (ILFLNKKD). The segment at 324-329 (TCATDT) is G5 motif.

Belongs to the G-alpha family. G(i/o/t/z) subfamily. Heterotrimeric G proteins are composed of 3 units; alpha, beta and gamma. The alpha subunit contains the guanine nucleotide binding site. GTP binding causes dissociation of the heterotrimer, liberating the individual subunits so that they can interact with downstream effector proteins. Forms a complex with CCDC88A/GIV and EGFR which leads to enhanced EGFR signaling and triggering of cell migration; ligand stimulation is required for recruitment of GNAI3 to the complex. Interacts (inactive GDP-bound form) with CCDC88A/GIV (via GBA motif); the interaction leads to activation of GNAI3. Interacts (inactive GDP-bound form) with CCDC88C/DAPLE (via GBA motif); the interaction leads to activation of GNAI3. Interacts (inactive GDP-bound form) with NUCB1 (via GBA motif) and NUCB2 (via GBA motif); the interaction leads to activation of GNAI3. Interacts (inactive GDP-bound form) with PLCD4 (via GBA motif); the interaction leads to activation of GNAI3. Interacts with INSR; the interaction is probably mediated by CCDC88A/GIV. Interacts with GPSM1. Interacts (GDP-bound form) with GPSM2 (via GoLoco domains). Does not interact with RGS2. Interacts with RGS8 and RGS10; this strongly enhances the intrinsic GTPase activity. Interacts with RGS16; this strongly enhances the intrinsic GTPase activity. Interacts with RGS12. Interacts (via active GTP- or inactive GDP-bound form) with RGS14. Interacts (via active GTP-bound form) with TRPC5 (via ANK repeats) in a homotetrameric ion channel; the interaction is direct and activates the channel activity.

It is found in the cytoplasm. The protein resides in the cell membrane. The protein localises to the cytoskeleton. Its subcellular location is the microtubule organizing center. It localises to the centrosome. Its function is as follows. Heterotrimeric guanine nucleotide-binding proteins (G proteins) function as transducers downstream of G protein-coupled receptors (GPCRs) in numerous signaling cascades. The alpha chain contains the guanine nucleotide binding site and alternates between an active, GTP-bound state and an inactive, GDP-bound state. Signaling by an activated GPCR promotes GDP release and GTP binding. The alpha subunit has a low GTPase activity that converts bound GTP to GDP, thereby terminating the signal. Both GDP release and GTP hydrolysis are modulated by numerous regulatory proteins. Signaling is mediated via effector proteins, such as adenylate cyclase. Inhibits adenylate cyclase activity, leading to decreased intracellular cAMP levels. Stimulates the activity of receptor-regulated K(+) channels. The active GTP-bound form prevents the association of RGS14 with centrosomes and is required for the translocation of RGS14 from the cytoplasm to the plasma membrane. May play a role in cell division. The active GTP-bound form activates the calcium permeant TRPC5 ion channels. This Mus musculus (Mouse) protein is Guanine nucleotide-binding protein G(i) subunit alpha-3 (Gnai3).